Reading from the N-terminus, the 160-residue chain is Transcription elongation factor GreA (160 aa).

The stretch at 3–84 forms a coiled coil; the sequence is NIVDDKILLT…SKAKIIKADL (82 aa).

The protein belongs to the GreA/GreB family.

Its function is as follows. Necessary for efficient RNA polymerase transcription elongation past template-encoded arresting sites. The arresting sites in DNA have the property of trapping a certain fraction of elongating RNA polymerases that pass through, resulting in locked ternary complexes. Cleavage of the nascent transcript by cleavage factors such as GreA or GreB allows the resumption of elongation from the new 3'terminus. GreA releases sequences of 2 to 3 nucleotides. This Mesomycoplasma hyopneumoniae (strain J / ATCC 25934 / NCTC 10110) (Mycoplasma hyopneumoniae) protein is Transcription elongation factor GreA.